We begin with the raw amino-acid sequence, 241 residues long: Xyloglucan-specific endo-beta-1,4-glucanase 1 (241 aa).

Positions 1–19 are cleaved as a signal peptide; the sequence is MKGFFAGVVAAATLAVASA. The active site involves Glu-136. N-linked (GlcNAc...) asparagine glycosylation is found at Asn-174 and Asn-190. The active site involves Glu-222.

It belongs to the glycosyl hydrolase 12 (cellulase H) family. Interacts with host apoplastic glucanase inhibitor GIP1.

The protein localises to the secreted. It is found in the host. The enzyme catalyses xyloglucan + H2O = xyloglucan oligosaccharides.. With respect to regulation, the xyloglucanase activity is inhibited by the binding of the host apoplastic glucanase inhibitor GIP1. Its function is as follows. Glycoside hydrolase that exhibits xyloglucanase activity. Acts as an important virulence factor during P.sojae infection but also acts as a pathogen-associated molecular pattern (PAMP) in soybean and solanaceous species, where it can trigger defense responses including cell death. XEG1-induced cell death can be suppressed by P.sojae RxLR effectors. The PAMP activity is independent of its xyloglucanase activity. XEG1 induces plant defense responses in a RLP kinase Serk3/Bak1-dependent manner in Nicotiana benthamiana. Moreover, the perception of XEG1 occurs independently of the perception of ethylene-inducing xylanase Eix2 in Tomato. With truncated paralog XLP1, is required to elevate apoplastic sugar during P.sojae infection. The polypeptide is Xyloglucan-specific endo-beta-1,4-glucanase 1 (Phytophthora sojae (strain P6497) (Soybean stem and root rot agent)).